We begin with the raw amino-acid sequence, 404 residues long: Tyrosine--tRNA ligase (404 aa).

The short motif at Pro-45 to His-54 is the 'HIGH' region element. A 'KMSKS' region motif is present at residues Lys-229–Ser-233. Lys-232 contacts ATP. The S4 RNA-binding domain maps to Ile-342–Phe-402.

It belongs to the class-I aminoacyl-tRNA synthetase family. TyrS type 2 subfamily. In terms of assembly, homodimer.

The protein localises to the cytoplasm. It catalyses the reaction tRNA(Tyr) + L-tyrosine + ATP = L-tyrosyl-tRNA(Tyr) + AMP + diphosphate + H(+). Functionally, catalyzes the attachment of tyrosine to tRNA(Tyr) in a two-step reaction: tyrosine is first activated by ATP to form Tyr-AMP and then transferred to the acceptor end of tRNA(Tyr). This Acinetobacter baylyi (strain ATCC 33305 / BD413 / ADP1) protein is Tyrosine--tRNA ligase.